We begin with the raw amino-acid sequence, 453 residues long: Carbamoyl phosphate synthase arginine-specific small chain (453 aa).

Residues 1-28 (MFARVFKAMPARASALTSVNASIQARFM) constitute a mitochondrion transit peptide. Positions 219-406 (HVAVIDCGVK…IDSVKKYKAS (188 aa)) constitute a Glutamine amidotransferase type-1 domain. Catalysis depends on C295, which acts as the Nucleophile. Catalysis depends on residues H379 and E381.

This sequence belongs to the CarA family. Heterodimer composed of 2 chains; the small (or glutamine) chain promotes the hydrolysis of glutamine to ammonia, which is used by the large (or ammonia) chain to synthesize carbamoyl phosphate.

The protein localises to the mitochondrion matrix. The enzyme catalyses hydrogencarbonate + L-glutamine + 2 ATP + H2O = carbamoyl phosphate + L-glutamate + 2 ADP + phosphate + 2 H(+). It catalyses the reaction L-glutamine + H2O = L-glutamate + NH4(+). It participates in amino-acid biosynthesis; L-arginine biosynthesis; carbamoyl phosphate from bicarbonate: step 1/1. Its function is as follows. Small subunit of the arginine-specific carbamoyl phosphate synthase (CPSase). CPSase catalyzes the formation of carbamoyl phosphate from the ammonia moiety of glutamine, carbonate, and phosphate donated by ATP, the first step of the arginine biosynthetic pathway. The small subunit (glutamine amidotransferase) binds and cleaves glutamine to supply the large subunit with the substrate ammonia. The chain is Carbamoyl phosphate synthase arginine-specific small chain (cpa1) from Neosartorya fischeri (strain ATCC 1020 / DSM 3700 / CBS 544.65 / FGSC A1164 / JCM 1740 / NRRL 181 / WB 181) (Aspergillus fischerianus).